We begin with the raw amino-acid sequence, 99 residues long: MLVTRDPITADGALLLKTYHCVEDRLSGAGLRLVAEVAANKVVVSFPLRVMNGRAAVFTRPHNDALSRLADERGWAVRRARLSTEEFVDVDKERGGTEH.

This is an uncharacterized protein from Micromonospora olivasterospora.